Reading from the N-terminus, the 117-residue chain is Gamma-aminobutyric acid receptor-associated protein-like 1 (117 aa).

The Phosphatidylethanolamine amidated glycine; alternate moiety is linked to residue glycine 116. A lipid anchor (Phosphatidylserine amidated glycine; alternate) is attached at glycine 116. Lysine 117 is a propeptide (removed in mature form).

This sequence belongs to the ATG8 family. As to quaternary structure, interacts with ATG13, OPRK1, RB1CC1 and ULK1. Interacts with TP53INP1 and TP53INP2. Directly interacts with SQSTM1. Interacts with ATG3, ATG7 and MAP15. Interacts with TECPR2. Interacts with TBC1D5. Interacts with MAPK15. Interacts with TRIM5. Interacts with MEFV and TRIM21. Interacts with WDFY3. Interacts with the reticulophagy receptor TEX264. Interacts with UBA5. Interacts with KBTBD6 and KBTBD7; the interaction is direct. Interacts with reticulophagy regulators RETREG1, RETREG2 and RETREG3. Interacts with IRGM. Interacts with DNM2. Interacts with NCOA4 (via C-terminus). The precursor molecule is cleaved by ATG4 (ATG4A, ATG4B, ATG4C or ATG4D) to expose the glycine at the C-terminus and form the cytosolic form, GABARAPL1-I. The processed form is then activated by APG7L/ATG7, transferred to ATG3 and conjugated to phosphatidylethanolamine (PE) phospholipid to form the membrane-bound form, GABARAPL1-II. During non-canonical autophagy, the processed form is conjugated to phosphatidylserine (PS) phospholipid. ATG4 proteins also mediate the delipidation of PE-conjugated forms required for GABARAPL1 recycling when autophagosomes fuse with lysosomes. In addition, ATG4B and ATG4D mediate delipidation of ATG8 proteins conjugated to PS during non-canonical autophagy. ATG4B constitutes the major protein for proteolytic activation. ATG4D is the main enzyme for delipidation activity.

The protein localises to the cytoplasmic vesicle. Its subcellular location is the autophagosome. It is found in the cytoplasmic vesicle membrane. The protein resides in the cytoplasm. It localises to the cytoskeleton. The protein localises to the endoplasmic reticulum. Its subcellular location is the golgi apparatus. In terms of biological role, ubiquitin-like modifier that increases cell-surface expression of kappa-type opioid receptor through facilitating anterograde intracellular trafficking of the receptor. Involved in formation of autophagosomal vacuoles. While LC3s are involved in elongation of the phagophore membrane, the GABARAP/GATE-16 subfamily is essential for a later stage in autophagosome maturation. Through its interaction with the reticulophagy receptor TEX264, participates in the remodeling of subdomains of the endoplasmic reticulum into autophagosomes upon nutrient stress, which then fuse with lysosomes for endoplasmic reticulum turnover. The protein is Gamma-aminobutyric acid receptor-associated protein-like 1 of Pongo abelii (Sumatran orangutan).